The primary structure comprises 40 residues: Photosystem II reaction center protein J (40 aa).

A helical transmembrane segment spans residues 8-28; that stretch reads IPLWIIGTVAGILVIGLVGVF.

It belongs to the PsbJ family. In terms of assembly, PSII is composed of 1 copy each of membrane proteins PsbA, PsbB, PsbC, PsbD, PsbE, PsbF, PsbH, PsbI, PsbJ, PsbK, PsbL, PsbM, PsbT, PsbX, PsbY, PsbZ, Psb30/Ycf12, at least 3 peripheral proteins of the oxygen-evolving complex and a large number of cofactors. It forms dimeric complexes.

It is found in the plastid. The protein localises to the chloroplast thylakoid membrane. In terms of biological role, one of the components of the core complex of photosystem II (PSII). PSII is a light-driven water:plastoquinone oxidoreductase that uses light energy to abstract electrons from H(2)O, generating O(2) and a proton gradient subsequently used for ATP formation. It consists of a core antenna complex that captures photons, and an electron transfer chain that converts photonic excitation into a charge separation. This chain is Photosystem II reaction center protein J, found in Helianthus annuus (Common sunflower).